A 933-amino-acid chain; its full sequence is Isoleucine--tRNA ligase (933 aa).

The short motif at 57-67 is the 'HIGH' region element; that stretch reads PYANGNIHVGH. E554 serves as a coordination point for L-isoleucyl-5'-AMP. Residues 595 to 599 carry the 'KMSKS' region motif; that stretch reads KMSKS. Residue K598 coordinates ATP.

The protein belongs to the class-I aminoacyl-tRNA synthetase family. IleS type 1 subfamily. Monomer.

The protein localises to the cytoplasm. The enzyme catalyses tRNA(Ile) + L-isoleucine + ATP = L-isoleucyl-tRNA(Ile) + AMP + diphosphate. Catalyzes the attachment of isoleucine to tRNA(Ile). As IleRS can inadvertently accommodate and process structurally similar amino acids such as valine, to avoid such errors it has two additional distinct tRNA(Ile)-dependent editing activities. One activity is designated as 'pretransfer' editing and involves the hydrolysis of activated Val-AMP. The other activity is designated 'posttransfer' editing and involves deacylation of mischarged Val-tRNA(Ile). The chain is Isoleucine--tRNA ligase from Streptococcus pyogenes serotype M18 (strain MGAS8232).